We begin with the raw amino-acid sequence, 394 residues long: Queuine tRNA-ribosyltransferase accessory subunit 2 (394 aa).

Zn(2+)-binding residues include Cys336, Cys338, Cys341, and His367.

The protein belongs to the queuine tRNA-ribosyltransferase family. QTRT2 subfamily. As to quaternary structure, heterodimer of a catalytic subunit and an accessory subunit. The cofactor is Zn(2+).

The protein resides in the cytoplasm. Functionally, non-catalytic subunit of the queuine tRNA-ribosyltransferase (TGT) that catalyzes the base-exchange of a guanine (G) residue with queuine (Q) at position 34 (anticodon wobble position) in tRNAs with GU(N) anticodons (tRNA-Asp, -Asn, -His and -Tyr), resulting in the hypermodified nucleoside queuosine (7-(((4,5-cis-dihydroxy-2-cyclopenten-1-yl)amino)methyl)-7-deazaguanosine). This Ixodes scapularis (Black-legged tick) protein is Queuine tRNA-ribosyltransferase accessory subunit 2.